A 146-amino-acid chain; its full sequence is 3-dehydroquinate dehydratase (146 aa).

Y24 (proton acceptor) is an active-site residue. Residues N73, H79, and D86 each contribute to the substrate site. The active-site Proton donor is H99. Substrate-binding positions include 100 to 101 (LS) and R110.

This sequence belongs to the type-II 3-dehydroquinase family. As to quaternary structure, homododecamer.

It carries out the reaction 3-dehydroquinate = 3-dehydroshikimate + H2O. It functions in the pathway metabolic intermediate biosynthesis; chorismate biosynthesis; chorismate from D-erythrose 4-phosphate and phosphoenolpyruvate: step 3/7. In terms of biological role, catalyzes a trans-dehydration via an enolate intermediate. This chain is 3-dehydroquinate dehydratase, found in Shewanella baltica (strain OS185).